We begin with the raw amino-acid sequence, 419 residues long: Tubby-like protein 4 (419 aa).

The interval 1–96 (MAATKREPLR…EREEEEEGSS (96 aa)) is disordered. A compositionally biased stretch (basic and acidic residues) spans 33-57 (AKEKEKENEVPTEIGRGKDGGEKKP).

Belongs to the TUB family.

This Oryza sativa subsp. japonica (Rice) protein is Tubby-like protein 4 (TULP4).